The following is a 923-amino-acid chain: Probable ribosylation factor GTPase-activating protein cnt6 (923 aa).

Serine 207 carries the phosphoserine modification. A compositionally biased stretch (basic and acidic residues) spans 444–455 (TTRRDKGREMHR). The tract at residues 444–476 (TTRRDKGREMHRSQVIQTSGRPKSMAPPSPSPI) is disordered. The region spanning 526-632 (KIFKEGLLLV…WIEAICEAAK (107 aa)) is the PH domain. In terms of domain architecture, Arf-GAP spans 714 to 837 (NIFIQMLRKT…AFIDFAGVDA (124 aa)). Residues 730–754 (CADCGSVKDVTWCSINIPVVLCIEC) form a C4-type zinc finger.

The protein resides in the cytoplasm. It localises to the cell tip. GTPase-activating protein for the ADP ribosylation factor family. In Schizosaccharomyces pombe (strain 972 / ATCC 24843) (Fission yeast), this protein is Probable ribosylation factor GTPase-activating protein cnt6 (cnt6).